A 56-amino-acid chain; its full sequence is Protein translocase subunit SecE (56 aa).

The helical transmembrane segment at 30–50 (VFWLVLFVSIFLGIVDYLMFL) threads the bilayer.

This sequence belongs to the SecE/SEC61-gamma family. Component of the Sec protein translocase complex. Heterotrimer consisting of SecY, SecE and SecG subunits. The heterotrimers can form oligomers, although 1 heterotrimer is thought to be able to translocate proteins. Interacts with the ribosome. Interacts with SecDF, and other proteins may be involved. Interacts with SecA.

It localises to the cell inner membrane. In terms of biological role, essential subunit of the Sec protein translocation channel SecYEG. Clamps together the 2 halves of SecY. May contact the channel plug during translocation. The polypeptide is Protein translocase subunit SecE (Borreliella burgdorferi (strain ATCC 35210 / DSM 4680 / CIP 102532 / B31) (Borrelia burgdorferi)).